We begin with the raw amino-acid sequence, 1403 residues long: Sushi, nidogen and EGF-like domain-containing protein 1 (1403 aa).

The N-terminal stretch at 1–24 is a signal peptide; sequence MRLGAAWALLLAAALGLGTRGVRA. Residues 103-258 enclose the NIDO domain; sequence AFWADVDNRR…GRWAFRIDDA (156 aa). EGF-like domains follow at residues 268–309, 311–347, and 349–385; these read TTSV…RRCH, DVNECASHPCQNGGTCTHGVNSFSCQCPAGFKGPTCE, and AQSPCDNKVCQNGGQCQAESSSAVCVCQAGYTGATCE. 18 cysteine pairs are disulfide-bonded: cysteine 272–cysteine 284, cysteine 278–cysteine 297, cysteine 299–cysteine 308, cysteine 315–cysteine 326, cysteine 320–cysteine 335, cysteine 337–cysteine 346, cysteine 353–cysteine 364, cysteine 358–cysteine 373, cysteine 375–cysteine 384, cysteine 391–cysteine 402, cysteine 396–cysteine 411, cysteine 413–cysteine 422, cysteine 433–cysteine 444, cysteine 438–cysteine 453, cysteine 455–cysteine 464, cysteine 472–cysteine 480, cysteine 474–cysteine 488, and cysteine 490–cysteine 499. The N-linked (GlcNAc...) asparagine glycan is linked to asparagine 292. In terms of domain architecture, EGF-like 4; calcium-binding spans 387–423; it reads DVDECSSDPCQNGGSCVDLVGNYSCICVEPFEGPQCE. N-linked (GlcNAc...) asparagine glycosylation is present at asparagine 408. EGF-like domains are found at residues 429–465 and 468–500; these read VPSPCLSNPCQNGGTCVDADEGYVCECPEGFMGLDCR and ILNDCDCRNGGRCLGANTTLCQCPPGFFGLLCE. The N-linked (GlcNAc...) asparagine glycan is linked to asparagine 484. A glycan (N-linked (GlcNAc...) asparagine) is linked at asparagine 536. EGF-like domains follow at residues 541-577, 580-616, 619-655, and 657-693; these read LPSPCDSDPCFNGGSCDAHEDSYTCECPRGFHGRHCE, RPHLCSSGPCRNGGTCKEMGDEYRCTCPYRFTGRHCE, KPDSCASGPCHNGGTCFHYIGKYKCDCPPGFSGRHCE, and APSPCFRSPCMNGGTCEDLGTDFSCYCQPGYTGHRCQ. 26 disulfide bridges follow: cysteine 545–cysteine 556, cysteine 550–cysteine 565, cysteine 567–cysteine 576, cysteine 584–cysteine 595, cysteine 589–cysteine 604, cysteine 606–cysteine 615, cysteine 623–cysteine 634, cysteine 628–cysteine 643, cysteine 645–cysteine 654, cysteine 661–cysteine 672, cysteine 666–cysteine 681, cysteine 683–cysteine 692, cysteine 698–cysteine 739, cysteine 724–cysteine 751, cysteine 757–cysteine 768, cysteine 762–cysteine 777, cysteine 779–cysteine 788, cysteine 795–cysteine 806, cysteine 800–cysteine 815, cysteine 817–cysteine 826, cysteine 833–cysteine 844, cysteine 838–cysteine 853, cysteine 855–cysteine 864, cysteine 871–cysteine 882, cysteine 876–cysteine 891, and cysteine 893–cysteine 902. Positions 696-753 constitute a Sushi domain; sequence VDCGHPEEVEHATMRFNGTHVGSVALYTCEPGFSLSALSHIRVCQPQGVWSQPPQCIE. A glycan (N-linked (GlcNAc...) asparagine) is linked at asparagine 712. Positions 753-789 constitute an EGF-like 11; calcium-binding domain; sequence EVDECRSQPCLHGGSCQDLIADYQCLCSPGYEGVHCE. The region spanning 791-827 is the EGF-like 12; calcium-binding domain; it reads ETDECQAQPCRNGGSCRDLPRAFICQCPEGFVGIHCE. EGF-like domains are found at residues 829 to 865 and 867 to 903; these read EVDACASSPCQHGGRCEDGGGAYLCVCPEGFFGYNCE and VSDPCFSSPCGSRGYCLASNGSHSCTCKVGYTGKDCT. Asparagine 886 is a glycosylation site (N-linked (GlcNAc...) asparagine). Fibronectin type-III domains follow at residues 908 to 1006, 1007 to 1105, and 1106 to 1200; these read PPTA…TRPR, PIED…TRPL, and PPAN…SPRD. N-linked (GlcNAc...) asparagine glycans are attached at residues asparagine 977, asparagine 1015, asparagine 1109, asparagine 1139, and asparagine 1298. An EGF-like 15 domain is found at 1306–1342; sequence TPGSCSEDACQNGGTCVPGADAHSCDCRPGFKGRHCE. Cystine bridges form between cysteine 1310-cysteine 1321, cysteine 1315-cysteine 1330, and cysteine 1332-cysteine 1341.

Post-translationally, phosphorylated on serine and threonine residues. N-glycosylated. In terms of tissue distribution, expressed in lung.

The protein resides in the secreted. The protein localises to the extracellular space. It localises to the extracellular matrix. The sequence is that of Sushi, nidogen and EGF-like domain-containing protein 1 from Mus musculus (Mouse).